We begin with the raw amino-acid sequence, 478 residues long: RNA-binding protein 42 (478 aa).

Residues 1-20 (MASAMAGAGPAPGLPVAGGP) show a composition bias toward low complexity. A disordered region spans residues 1–33 (MASAMAGAGPAPGLPVAGGPVVPGPGVGIPGKS). N-acetylalanine is present on A2. A Phosphoserine modification is found at S133. 4 positions are modified to asymmetric dimethylarginine: R151, R156, R166, and R179. 2 disordered regions span residues 171-209 (LSSA…PPMA) and 317-354 (SLRP…PEKL). The span at 193–205 (PPLPGPPGPPMML) shows a compositional bias: pro residues. The segment at 234–478 (DLGLGLGLGL…QKEKKKLGLR (245 aa)) is necessary for interaction with HNRNPK. The segment covering 343 to 354 (GEDKKKGKPEKL) has biased composition (basic and acidic residues). An RRM domain is found at 379–457 (FRIFCGDLGN…RPIKLRKSMW (79 aa)).

It belongs to the RRM RBM42 family. As to quaternary structure, interacts with HNRNPK.

The protein localises to the nucleus. The protein resides in the cytoplasm. Functionally, binds (via the RRM domain) to the 3' untranslated region (UTR) of p21 mRNA. This Rattus norvegicus (Rat) protein is RNA-binding protein 42 (Rbm42).